Here is a 438-residue protein sequence, read N- to C-terminus: Serine carboxypeptidase-like 5 (438 aa).

Residues 1-28 form the signal peptide; the sequence is MANYISSVLKSLLLLLHLVFLIQQHVDS. 3 disulfides stabilise this stretch: Cys-87-Cys-328, Cys-251-Cys-263, and Cys-287-Cys-294. Asn-108 carries N-linked (GlcNAc...) asparagine glycosylation. The active site involves Ser-183. N-linked (GlcNAc...) asparagine glycosylation is present at Asn-347. The active site involves Asp-363. A glycan (N-linked (GlcNAc...) asparagine) is linked at Asn-379. His-416 is an active-site residue.

This sequence belongs to the peptidase S10 family. Expressed in seedlings, roots, and siliques.

It is found in the secreted. Its function is as follows. Probable carboxypeptidase. This Arabidopsis thaliana (Mouse-ear cress) protein is Serine carboxypeptidase-like 5 (SCPL5).